The following is a 274-amino-acid chain: Glucosamine-6-phosphate deaminase (274 aa).

Aspartate 71 (proton acceptor; for enolization step) is an active-site residue. Residue aspartate 140 is the For ring-opening step of the active site. Catalysis depends on histidine 142, which acts as the Proton acceptor; for ring-opening step. The active-site For ring-opening step is the glutamate 147.

This sequence belongs to the glucosamine/galactosamine-6-phosphate isomerase family. NagB subfamily.

It carries out the reaction alpha-D-glucosamine 6-phosphate + H2O = beta-D-fructose 6-phosphate + NH4(+). It participates in amino-sugar metabolism; N-acetylneuraminate degradation; D-fructose 6-phosphate from N-acetylneuraminate: step 5/5. In terms of biological role, catalyzes the reversible isomerization-deamination of glucosamine 6-phosphate (GlcN6P) to form fructose 6-phosphate (Fru6P) and ammonium ion. The polypeptide is Glucosamine-6-phosphate deaminase (Fusobacterium nucleatum subsp. nucleatum (strain ATCC 25586 / DSM 15643 / BCRC 10681 / CIP 101130 / JCM 8532 / KCTC 2640 / LMG 13131 / VPI 4355)).